The sequence spans 750 residues: Photosystem I P700 chlorophyll a apoprotein A1 (750 aa).

Transmembrane regions (helical) follow at residues 72–95 (VFSA…FHGA), 158–181 (LYTT…FHYH), 197–221 (MNHH…HVSL), 293–311 (TVHH…GHMY), 348–371 (WHAQ…HHMY), 387–413 (LSLF…IFMV), 435–457 (AIIS…LYIH), and 532–550 (FLVH…LILL). The [4Fe-4S] cluster site is built by Cys-574 and Cys-583. The next 2 membrane-spanning stretches (helical) occupy residues 590–611 (HVFL…HFSW) and 664–686 (LSAY…MFLF). His-675 serves as a coordination point for chlorophyll a'. Met-683 and Tyr-691 together coordinate chlorophyll a. Trp-692 contributes to the phylloquinone binding site. Residues 724 to 744 (AVGVAHYLLGGIATTWAFFLA) form a helical membrane-spanning segment.

The protein belongs to the PsaA/PsaB family. The PsaA/B heterodimer binds the P700 chlorophyll special pair and subsequent electron acceptors. PSI consists of a core antenna complex that captures photons, and an electron transfer chain that converts photonic excitation into a charge separation. The eukaryotic PSI reaction center is composed of at least 11 subunits. It depends on P700 is a chlorophyll a/chlorophyll a' dimer, A0 is one or more chlorophyll a, A1 is one or both phylloquinones and FX is a shared 4Fe-4S iron-sulfur center. as a cofactor.

The protein resides in the plastid. Its subcellular location is the chloroplast thylakoid membrane. It catalyses the reaction reduced [plastocyanin] + hnu + oxidized [2Fe-2S]-[ferredoxin] = oxidized [plastocyanin] + reduced [2Fe-2S]-[ferredoxin]. In terms of biological role, psaA and PsaB bind P700, the primary electron donor of photosystem I (PSI), as well as the electron acceptors A0, A1 and FX. PSI is a plastocyanin-ferredoxin oxidoreductase, converting photonic excitation into a charge separation, which transfers an electron from the donor P700 chlorophyll pair to the spectroscopically characterized acceptors A0, A1, FX, FA and FB in turn. Oxidized P700 is reduced on the lumenal side of the thylakoid membrane by plastocyanin. The chain is Photosystem I P700 chlorophyll a apoprotein A1 from Mesostigma viride (Green alga).